Reading from the N-terminus, the 515-residue chain is Signal transduction histidine-protein kinase/phosphatase MprB (515 aa).

At 1-24 the chain is on the cytoplasmic side; sequence MTLPPQPSRLKPPRNTSSLSLRWR. Residues 25–45 traverse the membrane as a helical segment; that stretch reads VMLLAMSMVAMVVVLMSVAVY. The Extracellular segment spans residues 46–165; that stretch reads AVVSRALYDD…TGQVLGRLGT (120 aa). The chain crosses the membrane as a helical span at residues 166-186; that stretch reads VLLIVGGVGVAVAAIAGGMVA. The HAMP domain occupies 187–239; it reads RAGLRPVGRLTQAAERVARTDDLRPIPVFGSDELARLTEAFNMMLRALTESRE. The Cytoplasmic segment spans residues 187-515; that stretch reads RAGLRPVGRL…GKSRSASKEL (329 aa). Residues 247–467 form the Histidine kinase domain; it reads DAGHELRTPL…SFYVMLPGRP (221 aa). Phosphohistidine; by autocatalysis is present on histidine 250. Residues 468 to 515 form a disordered region; it reads LTPGGNGTAPVPAAQFDPDMRSAGSRADRRVIKNTETNGKSRSASKEL.

Mg(2+) is required as a cofactor. Mn(2+) serves as cofactor. Autophosphorylated.

Its subcellular location is the cell membrane. It carries out the reaction ATP + protein L-histidine = ADP + protein N-phospho-L-histidine.. Its function is as follows. Member of the two-component regulatory system MprB/MprA which contributes to maintaining a balance among several systems involved in stress resistance and is required for establishment and maintenance of persistent infection in the host. In response to environmental signals MprB acts both as a membrane-associated protein kinase that undergoes autophosphorylation and subsequently transfers the phosphate to MprA, and a protein phosphatase that dephosphorylates phospho-MprA. The sequence is that of Signal transduction histidine-protein kinase/phosphatase MprB (mprB) from Mycobacterium sp. (strain JLS).